The following is a 100-amino-acid chain: NADH-quinone oxidoreductase subunit K 2 (100 aa).

The next 3 helical transmembrane spans lie at 4 to 24 (LHSY…GVLI), 29 to 49 (IVIF…FIAL), and 60 to 80 (IFVF…LALM).

Belongs to the complex I subunit 4L family. NDH-1 is composed of 14 different subunits. Subunits NuoA, H, J, K, L, M, N constitute the membrane sector of the complex.

It is found in the cell inner membrane. The catalysed reaction is a quinone + NADH + 5 H(+)(in) = a quinol + NAD(+) + 4 H(+)(out). In terms of biological role, NDH-1 shuttles electrons from NADH, via FMN and iron-sulfur (Fe-S) centers, to quinones in the respiratory chain. The immediate electron acceptor for the enzyme in this species is believed to be ubiquinone. Couples the redox reaction to proton translocation (for every two electrons transferred, four hydrogen ions are translocated across the cytoplasmic membrane), and thus conserves the redox energy in a proton gradient. This Geobacter metallireducens (strain ATCC 53774 / DSM 7210 / GS-15) protein is NADH-quinone oxidoreductase subunit K 2.